The sequence spans 269 residues: tRNA (guanine-N(7)-)-methyltransferase (269 aa).

Residues Met1–Leu38 form a disordered region. Positions 91, 116, 143, and 166 each coordinate S-adenosyl-L-methionine. Asp166 is an active-site residue. Residues Lys170, Asp202, and Thr247–Glu250 each bind substrate.

This sequence belongs to the class I-like SAM-binding methyltransferase superfamily. TrmB family.

The catalysed reaction is guanosine(46) in tRNA + S-adenosyl-L-methionine = N(7)-methylguanosine(46) in tRNA + S-adenosyl-L-homocysteine. Its pathway is tRNA modification; N(7)-methylguanine-tRNA biosynthesis. Its function is as follows. Catalyzes the formation of N(7)-methylguanine at position 46 (m7G46) in tRNA. The sequence is that of tRNA (guanine-N(7)-)-methyltransferase from Nocardia farcinica (strain IFM 10152).